The primary structure comprises 579 residues: Thiol:disulfide interchange protein DsbD (579 aa).

The N-terminal stretch at 1 to 16 (MKKLFLFFTLIFTAFA) is a signal peptide. 2 disulfide bridges follow: cysteine 124-cysteine 129 and cysteine 193-cysteine 315. 8 helical membrane-spanning segments follow: residues 178–198 (IFGF…LPML), 230–250 (LTYT…QIAL), 254–274 (YVMI…FGLF), 296–316 (GAFG…SPCT), 337–357 (AVTL…ITLF), 376–396 (FGFV…PEVW), 397–417 (ESRL…LQMS), and 420–440 (GFGY…VQPL). The Thioredoxin domain maps to 449–579 (TTTQSAVENM…AFSNWIEKLL (131 aa)). The cysteines at positions 495 and 498 are disulfide-linked.

Belongs to the thioredoxin family. DsbD subfamily.

It is found in the cell inner membrane. It carries out the reaction [protein]-dithiol + NAD(+) = [protein]-disulfide + NADH + H(+). The enzyme catalyses [protein]-dithiol + NADP(+) = [protein]-disulfide + NADPH + H(+). In terms of biological role, required to facilitate the formation of correct disulfide bonds in some periplasmic proteins and for the assembly of the periplasmic c-type cytochromes. Acts by transferring electrons from cytoplasmic thioredoxin to the periplasm. This transfer involves a cascade of disulfide bond formation and reduction steps. The chain is Thiol:disulfide interchange protein DsbD from Haemophilus influenzae (strain PittGG).